A 407-amino-acid chain; its full sequence is Tyrosine--tRNA ligase (407 aa).

Tyr-35 lines the L-tyrosine pocket. A 'HIGH' region motif is present at residues 40 to 49 (PTADSLHVGH). L-tyrosine is bound by residues Tyr-168 and Gln-172. A 'KMSKS' region motif is present at residues 228 to 232 (KMGKT). Residue Lys-231 coordinates ATP. The S4 RNA-binding domain maps to 341 to 405 (NSLVDLLAKC…RGKKNFNRIV (65 aa)).

It belongs to the class-I aminoacyl-tRNA synthetase family. TyrS type 1 subfamily. Homodimer.

The protein resides in the cytoplasm. It carries out the reaction tRNA(Tyr) + L-tyrosine + ATP = L-tyrosyl-tRNA(Tyr) + AMP + diphosphate + H(+). In terms of biological role, catalyzes the attachment of tyrosine to tRNA(Tyr) in a two-step reaction: tyrosine is first activated by ATP to form Tyr-AMP and then transferred to the acceptor end of tRNA(Tyr). This chain is Tyrosine--tRNA ligase, found in Clostridium botulinum (strain Loch Maree / Type A3).